Consider the following 823-residue polypeptide: Bifunctional enzyme flvA (823 aa).

A pyridoxal 5'-phosphate-dependent lyase region spans residues 56–535; it reads TAKFEMALMP…QRLYDAKFYI (480 aa). Residue Lys-331 is modified to N6-(pyridoxal phosphate)lysine. The alpha-ketoglutarate-dependent oxygenase stretch occupies residues 573–823; sequence DFDALQQVSH…TLPMNVPLWL (251 aa). His-703 and Asp-705 together coordinate Fe cation.

In the N-terminal section; belongs to the trans-sulfuration enzymes family. It in the C-terminal section; belongs to the iron/ascorbate-dependent oxidoreductase family. Pyridoxal 5'-phosphate serves as cofactor. Fe(2+) is required as a cofactor.

The enzyme catalyses O-acetyl-L-homoserine + 3-methyl-2-oxobutanoate = (6S)-6-amino-3,3-dimethyl-2-oxoheptanedioate + acetate + H(+). The catalysed reaction is (6S)-3,3-dimethylpiperidine-2,6-dicarboxylate + 2-oxoglutarate + AH2 + O2 + H(+) = (2S)-5,5-dimethylpiperidine-2-carboxylate + succinate + A + 2 CO2 + H2O. It functions in the pathway secondary metabolite biosynthesis; terpenoid biosynthesis. Bifunctional enzyme; part of the gene cluster that mediates the biosynthesis of flavunoidine, an alkaloidal terpenoid with a tetracyclic cage-like core connected to dimethylcadaverine via a C-N bond and acylated with 5,5-dimethyl-L-pipecolate. The tetracyclic core is synthesized by the terpene cyclase flvE and the cytochrome P450 monooxygenase flvD. The terpene cyclase flvE catalyzes the cyclization of farnesyl pyrophosphate (FPP) to form (1R,4R,5S)-(+)-acoradiene and the cytochrome P450 monooxygenase flvD is then responsible for oxidative conversion of (1R,4R,5S)-(+)-acoradiene into the tetracyclic cage present in the final product flavunoidine. In parallel, the N-methyltransferase flvH dimethylates L-lysine to give N,N-dimethyl-L-Lysin which is decarboxylated by flvG to afford dimethylcadaverine. The terpene cyclase-like protein flvF is the enzyme that attaches the dimethylcadaverine precusor at the C-7 of the tetracyclic cage to yield pre-flavunoidine. The cytochrome monooxygenase flvC hydroxylates the C-10 position of pre-flavunoidine whereas the NRPS flvI acylates the terpenoid core at the hydroxylated C-10 with dimethylpipecolate to yield final flavunoidine. The bifunctional enzyme flvA and the dehydrogenase flvB are responsible for the synthesis of the dimethylpipecolate precursor. The PLP-dependent lyase domain of flvA might use L-O-acetyl-homoserine and alpha-keto-isovalerate to form an intermediary ketone that can cyclize intramolecularly to yield an imine. The imine can be reduced by flvB to yield the 6-carboxylated pipecolate. The C-terminal alpha-KG-dependent oxygenase domain of flvA is then proposed to catalyze the decarboxylation to yield dimethylpipecolate. The sequence is that of Bifunctional enzyme flvA from Aspergillus flavus (strain ATCC 200026 / FGSC A1120 / IAM 13836 / NRRL 3357 / JCM 12722 / SRRC 167).